Consider the following 408-residue polypeptide: Tryptophan synthase beta chain (408 aa).

The residue at position 90 (K90) is an N6-(pyridoxal phosphate)lysine.

Belongs to the TrpB family. As to quaternary structure, tetramer of two alpha and two beta chains. It depends on pyridoxal 5'-phosphate as a cofactor.

The catalysed reaction is (1S,2R)-1-C-(indol-3-yl)glycerol 3-phosphate + L-serine = D-glyceraldehyde 3-phosphate + L-tryptophan + H2O. It participates in amino-acid biosynthesis; L-tryptophan biosynthesis; L-tryptophan from chorismate: step 5/5. The beta subunit is responsible for the synthesis of L-tryptophan from indole and L-serine. The sequence is that of Tryptophan synthase beta chain from Bacillus licheniformis (strain ATCC 14580 / DSM 13 / JCM 2505 / CCUG 7422 / NBRC 12200 / NCIMB 9375 / NCTC 10341 / NRRL NRS-1264 / Gibson 46).